Here is a 481-residue protein sequence, read N- to C-terminus: 3-isopropylmalate dehydratase large subunit (481 aa).

Cys-357, Cys-417, and Cys-420 together coordinate [4Fe-4S] cluster. Over residues 429 to 441 (SPGQRCASTSNRN) the composition is skewed to polar residues. The segment at 429-451 (SPGQRCASTSNRNFEGRQGKGGR) is disordered.

It belongs to the aconitase/IPM isomerase family. LeuC type 1 subfamily. Heterodimer of LeuC and LeuD. The cofactor is [4Fe-4S] cluster.

The catalysed reaction is (2R,3S)-3-isopropylmalate = (2S)-2-isopropylmalate. The protein operates within amino-acid biosynthesis; L-leucine biosynthesis; L-leucine from 3-methyl-2-oxobutanoate: step 2/4. Functionally, catalyzes the isomerization between 2-isopropylmalate and 3-isopropylmalate, via the formation of 2-isopropylmaleate. The sequence is that of 3-isopropylmalate dehydratase large subunit from Mycobacterium sp. (strain KMS).